Consider the following 35-residue polypeptide: Photosystem II reaction center protein T (35 aa).

The helical transmembrane segment at 3–23 (ALVYTFLLISTLGIIFFAIFF) threads the bilayer.

Belongs to the PsbT family. As to quaternary structure, PSII is composed of 1 copy each of membrane proteins PsbA, PsbB, PsbC, PsbD, PsbE, PsbF, PsbH, PsbI, PsbJ, PsbK, PsbL, PsbM, PsbT, PsbY, PsbZ, Psb30/Ycf12, at least 3 peripheral proteins of the oxygen-evolving complex and a large number of cofactors. It forms dimeric complexes.

It localises to the plastid. Its subcellular location is the chloroplast thylakoid membrane. Found at the monomer-monomer interface of the photosystem II (PS II) dimer, plays a role in assembly and dimerization of PSII. PSII is a light-driven water plastoquinone oxidoreductase, using light energy to abstract electrons from H(2)O, generating a proton gradient subsequently used for ATP formation. This chain is Photosystem II reaction center protein T, found in Aristolochia macrophylla (Dutchman's pipe vine).